The following is a 298-amino-acid chain: Aquaporin NIP2-1 (298 aa).

Residues Asn4, Asn13, and Asn26 are each glycosylated (N-linked (GlcNAc...) asparagine). 2 consecutive transmembrane segments (helical) span residues 51-71 (VVSE…AAGI) and 85-105 (SIAG…ISGA). Positions 108-110 (NPA) match the NPA 1 motif. Transmembrane regions (helical) follow at residues 124–144 (IQVP…SFVL), 166–186 (SLVV…AVAT), and 194–214 (LAGL…GAIS). The NPA 2 signature appears at 219–221 (NPA). The helical transmembrane segment at 237–257 (WIYFLGPVMGTLSGAWTYTFI) threads the bilayer.

It belongs to the MIP/aquaporin (TC 1.A.8) family. NIP (TC 1.A.8.12) subfamily. In terms of tissue distribution, mainly expressed in the roots. In roots, it localizes in the main and lateral roots, but not in root hairs. Within a root, it localizes on the plasma membrane of the distal side of both exodermis and endodermis, where casparian strips exist (at protein level). Expressed low levels in leaves and anthers.

It is found in the cell membrane. Silicon influx transporter responsible for silicon transport from the external solution to the root cells. Is coupled with the silicon efflux transporter LSI2 in both exodermal and endodermal root cells for an efficient silicon transport across the cells into the stele. Silicon is beneficial to plant growth and helps plants to overcome abiotic and biotic stresses by preventing lodging (falling over) and increasing resistance to pests and diseases, as well as other stresses. Is coupled with LSI2 transporter in roots for efficient uptake of arsenite, which is further dispatched in shoots and grains. Mediates uptake of methylated arsenic species in roots. This is Aquaporin NIP2-1 from Oryza sativa subsp. japonica (Rice).